We begin with the raw amino-acid sequence, 225 residues long: Cytidylate kinase (225 aa).

12–20 provides a ligand contact to ATP; it reads GPSGAGKGT.

This sequence belongs to the cytidylate kinase family. Type 1 subfamily.

It is found in the cytoplasm. It carries out the reaction CMP + ATP = CDP + ADP. The catalysed reaction is dCMP + ATP = dCDP + ADP. This is Cytidylate kinase from Vibrio cholerae serotype O1 (strain ATCC 39315 / El Tor Inaba N16961).